The sequence spans 344 residues: N-acetyl-gamma-glutamyl-phosphate reductase (344 aa).

Cys150 is a catalytic residue.

It belongs to the NAGSA dehydrogenase family. Type 1 subfamily.

The protein localises to the cytoplasm. The catalysed reaction is N-acetyl-L-glutamate 5-semialdehyde + phosphate + NADP(+) = N-acetyl-L-glutamyl 5-phosphate + NADPH + H(+). It participates in amino-acid biosynthesis; L-arginine biosynthesis; N(2)-acetyl-L-ornithine from L-glutamate: step 3/4. Its function is as follows. Catalyzes the NADPH-dependent reduction of N-acetyl-5-glutamyl phosphate to yield N-acetyl-L-glutamate 5-semialdehyde. The polypeptide is N-acetyl-gamma-glutamyl-phosphate reductase (Pseudomonas putida (strain W619)).